The following is a 262-amino-acid chain: Glutamate racemase (262 aa).

Residues 9–10 (DS) and 41–42 (YG) each bind substrate. The active-site Proton donor/acceptor is Cys-73. 74–75 (NT) is a binding site for substrate. The Proton donor/acceptor role is filled by Cys-180. Position 181-182 (181-182 (TH)) interacts with substrate.

It belongs to the aspartate/glutamate racemases family.

It carries out the reaction L-glutamate = D-glutamate. It functions in the pathway cell wall biogenesis; peptidoglycan biosynthesis. Provides the (R)-glutamate required for cell wall biosynthesis. In Aliivibrio fischeri (strain ATCC 700601 / ES114) (Vibrio fischeri), this protein is Glutamate racemase.